The sequence spans 536 residues: Heparanase (536 aa).

The first 28 residues, 1–28 (MLRPLLLLWLWGRLGALTQGTPAGTAPT), serve as a signal peptide directing secretion. Heparan sulfate group contacts are provided by residues 55-57 (DAS) and T90. Residues 103 to 150 (PTSEERSYWQSQDNNDICGSERVSADVLRKLQMEWPFQELLLLREQYQ) constitute a propeptide, linker peptide. C120 and C172 form a disulfide bridge. 151–155 (REFKN) contacts heparan sulfate group. N-linked (GlcNAc...) asparagine glycans are attached at residues N155, N193, and N210. E218 functions as the Proton donor in the catalytic mechanism. Heparan sulfate group-binding positions include 263-273 (QPRGKTVKLLR), H289, and R296. The required for heterodimerization with the heparanase 8 kDa subunit stretch occupies residues 281–410 (EVIDSLTWHH…LLFKKLVGPK (130 aa)). Residue E336 is the Nucleophile of the active site. Heparan sulfate group-binding positions include 341-343 (YGG) and 382-384 (GNY). A disulfide bridge connects residues C430 and C535. A glycan (N-linked (GlcNAc...) asparagine) is linked at N452. A required for transferring proheparanase to the Golgi apparatus, secretion and subsequent enzyme activity and for enhancement of PKB/AKT1 phosphorylation region spans residues 520–536 (FSYGFFVIRNAKIAACI).

The protein belongs to the glycosyl hydrolase 79 family. In terms of assembly, heterodimer; heterodimer formation between the 8 kDa and the 50 kDa subunits is required for enzyme activity. Interacts with TF; the interaction, inhibited by heparin, enhances the generation of activated factor X and activates coagulation. Interacts with HRG; the interaction is enhanced at acidic pH, partially inhibits binding of HPSE to cell surface receptors and modulates its enzymatic activity. Interacts with SDC1; the interaction enhances the shedding of SDC1. Interacts with HPSE2. Post-translationally, proteolytically processed. The cleavage of the 65 kDa form leads to the generation of a linker peptide, and the 8 kDa and 50 kDa products. The active form, the 8/50 kDa heterodimer, is resistant to degradation. Complete removal of the linker peptide appears to be a prerequisite to the complete activation of the enzyme. In terms of processing, N-glycosylated. Glycosylation of the 50 kDa subunit appears to be essential for its solubility.

It is found in the lysosome membrane. Its subcellular location is the secreted. It localises to the nucleus. The catalysed reaction is endohydrolysis of (1-&gt;4)-beta-D-glycosidic bonds of heparan sulfate chains in heparan sulfate proteoglycan.. With respect to regulation, inhibited by laminarin sulfate and, to a lower extent, by heparin and sulfamin. Activated by calcium and magnesium. Inhibited by EDTA. In terms of biological role, endoglycosidase that cleaves heparan sulfate proteoglycans (HSPGs) into heparan sulfate side chains and core proteoglycans. Participates in extracellular matrix (ECM) degradation and remodeling. Selectively cleaves the linkage between a glucuronic acid unit and an N-sulfo glucosamine unit carrying either a 3-O-sulfo or a 6-O-sulfo group. Can also cleave the linkage between a glucuronic acid unit and an N-sulfo glucosamine unit carrying a 2-O-sulfo group, but not linkages between a glucuronic acid unit and a 2-O-sulfated iduronic acid moiety. It is essentially inactive at neutral pH but becomes active under acidic conditions such as during tumor invasion and in inflammatory processes. Facilitates cell migration associated with metastasis, wound healing and inflammation. Enhances shedding of syndecans, and increases endothelial invasion and angiogenesis in myelomas. Acts as a procoagulant by increasing the generation of activation factor X in the presence of tissue factor and activation factor VII. Increases cell adhesion to the extracellular matrix (ECM), independent of its enzymatic activity. Induces AKT1/PKB phosphorylation via lipid rafts increasing cell mobility and invasion. Heparin increases this AKT1/PKB activation. Regulates osteogenesis. Enhances angiogenesis through up-regulation of SRC-mediated activation of VEGF. Implicated in hair follicle inner root sheath differentiation and hair homeostasis. This chain is Heparanase (Hpse), found in Rattus norvegicus (Rat).